The primary structure comprises 157 residues: Small ribosomal subunit protein uS7 (157 aa).

Belongs to the universal ribosomal protein uS7 family. As to quaternary structure, part of the 30S ribosomal subunit. Contacts proteins S9 and S11.

In terms of biological role, one of the primary rRNA binding proteins, it binds directly to 16S rRNA where it nucleates assembly of the head domain of the 30S subunit. Is located at the subunit interface close to the decoding center, probably blocks exit of the E-site tRNA. This Protochlamydia amoebophila (strain UWE25) protein is Small ribosomal subunit protein uS7.